Reading from the N-terminus, the 347-residue chain is D-alanine--D-alanine ligase (347 aa).

Residues 131-333 (KRVLESAGIA…YPELIERLVD (203 aa)) enclose the ATP-grasp domain. 161–216 (EEKLAYPVFTKPSNMGSSVGISKSENQEELRQALKLAFRYDSRVLVEQGVNAREIE) provides a ligand contact to ATP. Mg(2+)-binding residues include aspartate 287, glutamate 300, and asparagine 302.

It belongs to the D-alanine--D-alanine ligase family. It depends on Mg(2+) as a cofactor. Requires Mn(2+) as cofactor.

The protein resides in the cytoplasm. It catalyses the reaction 2 D-alanine + ATP = D-alanyl-D-alanine + ADP + phosphate + H(+). It functions in the pathway cell wall biogenesis; peptidoglycan biosynthesis. Cell wall formation. This is D-alanine--D-alanine ligase from Streptococcus pneumoniae (strain ATCC BAA-255 / R6).